A 206-amino-acid chain; its full sequence is Large ribosomal subunit protein uL4 (206 aa).

A disordered region spans residues 63-98 (MYRQKGTGRARHSSARAPQFRGGGKAHGPVPHSHAH). Basic residues predominate over residues 64–76 (YRQKGTGRARHSS).

The protein belongs to the universal ribosomal protein uL4 family. In terms of assembly, part of the 50S ribosomal subunit.

Functionally, one of the primary rRNA binding proteins, this protein initially binds near the 5'-end of the 23S rRNA. It is important during the early stages of 50S assembly. It makes multiple contacts with different domains of the 23S rRNA in the assembled 50S subunit and ribosome. Its function is as follows. Forms part of the polypeptide exit tunnel. The chain is Large ribosomal subunit protein uL4 from Chelativorans sp. (strain BNC1).